The following is a 229-amino-acid chain: Heptaprenylglyceryl phosphate synthase (229 aa).

Lys12 provides a ligand contact to sn-glycerol 1-phosphate. 2 residues coordinate Mg(2+): Asp14 and Ser40. Residues 159–164 (YLEYSG), Gly189, and 209–210 (GN) contribute to the sn-glycerol 1-phosphate site.

This sequence belongs to the GGGP/HepGP synthase family. Group I subfamily. As to quaternary structure, homodimer. Mg(2+) serves as cofactor.

It carries out the reaction sn-glycerol 1-phosphate + all-trans-heptaprenyl diphosphate = 3-heptaprenyl-sn-glycero-1-phosphate + diphosphate. It participates in membrane lipid metabolism; glycerophospholipid metabolism. Functionally, prenyltransferase that catalyzes in vivo the transfer of the heptaprenyl moiety of heptaprenyl pyrophosphate (HepPP; 35 carbon atoms) to the C3 hydroxyl of sn-glycerol-1-phosphate (G1P), producing heptaprenylglyceryl phosphate (HepGP). This reaction is an ether-bond-formation step in the biosynthesis of archaea-type G1P-based membrane lipids found in Bacillales. The protein is Heptaprenylglyceryl phosphate synthase of Bacillus cereus (strain B4264).